Reading from the N-terminus, the 695-residue chain is UvrABC system protein C (695 aa).

Positions 1–10 (MNQDPAETRD) are enriched in basic and acidic residues. Positions 1-53 (MNQDPAETRDTAAPPPADTTSPSPVSPELEPRSAPGAQDIDAASASLTVDEDD) are disordered. Positions 18 to 27 (DTTSPSPVSP) are enriched in low complexity. Positions 88–166 (TSPGVYRMLN…IKQLRPRFNV (79 aa)) constitute a GIY-YIG domain. Residues 276–311 (RAVKQELAVEMEKASNELEFETAALYRDRLAALSAI) enclose the UVR domain.

The protein belongs to the UvrC family. As to quaternary structure, interacts with UvrB in an incision complex.

It is found in the cytoplasm. Its function is as follows. The UvrABC repair system catalyzes the recognition and processing of DNA lesions. UvrC both incises the 5' and 3' sides of the lesion. The N-terminal half is responsible for the 3' incision and the C-terminal half is responsible for the 5' incision. This is UvrABC system protein C from Rhodopseudomonas palustris (strain BisB5).